Consider the following 162-residue polypeptide: Endoribonuclease YbeY (162 aa).

Zn(2+) contacts are provided by His-117, His-121, and His-127.

Belongs to the endoribonuclease YbeY family. Zn(2+) is required as a cofactor.

The protein localises to the cytoplasm. Single strand-specific metallo-endoribonuclease involved in late-stage 70S ribosome quality control and in maturation of the 3' terminus of the 16S rRNA. This Francisella tularensis subsp. tularensis (strain WY96-3418) protein is Endoribonuclease YbeY.